A 4349-amino-acid chain; its full sequence is Dynein heavy chain, cytoplasmic (4349 aa).

Positions 1 to 1907 are stem; sequence MEVTSAAAPS…YIKMANAKLN (1907 aa). Coiled-coil stretches lie at residues 459-480, 1178-1215, 1266-1293, 1334-1354, 1560-1577, and 1640-1670; these read WEENVKEFTNVAREVTRRRNEK, LMKFASRLGNRMREINAEIEKARKHLESQSSDASSTAQ, SQWEALKEILEKKSRIVQDQTDALQAKI, ESRISKLQDDAQMVAKAKEAL, YKEFEEEAVAWEDKLNRV, and NIPNVQKSLERLAEMLNKIQKALGEYLEKER. AAA regions lie at residues 1908–2133, 2201–2459, 2565–2814, and 2908–3177; these read YGFE…VLVS, NAIR…FTTA, EVNT…WVRG, and TFCE…QGKV. 1946 to 1953 serves as a coordination point for ATP; it reads GPAGTGKT. Residues 2194–2217 are a coiled coil; sequence ANLEALENAIRELAAERHLVVNEL. ATP is bound by residues 2239–2246, 2604–2611, and 2946–2953; these read GNSGSGKS, GPPGSGKT, and GVSGSGKT. Coiled coils occupy residues 3186 to 3294, 3420 to 3477, and 3774 to 3807; these read LDFV…LAKA, GPLK…EMSR, and DNVIETLETLKTEAAEISAKMSNTEGVMAEVEEI. Residues 3186–3477 form a stalk region; it reads LDFVTQYIKL…TQAIKAEMSR (292 aa). 2 AAA regions span residues 3563–3792 and 4001–4213; these read LSTA…EISA and AERF…IVDT.

It belongs to the dynein heavy chain family. Consists of at least two heavy chains and a number of intermediate and light chains.

The protein localises to the cytoplasm. It localises to the cytoskeleton. Its function is as follows. Cytoplasmic dynein acts as a motor for the intracellular retrograde motility of vesicles and organelles along microtubules. Dynein has ATPase activity; the force-producing power stroke is thought to occur on release of ADP. The polypeptide is Dynein heavy chain, cytoplasmic (DHC1) (Fusarium vanettenii (Neocosmospora pisi)).